Reading from the N-terminus, the 985-residue chain is Ephrin type-A receptor 4-B (985 aa).

Positions 1 to 20 (MAGIVHGILFCGLFGLCWAV) are cleaved as a signal peptide. Topologically, residues 21 to 547 (TGSRIYPASE…MIGEGTSPTV (527 aa)) are extracellular. One can recognise an Eph LBD domain in the interval 30 to 209 (EVTLLDSRSV…FYKKCPLTVR (180 aa)). Fibronectin type-III domains are found at residues 328-438 (PPSA…TNQA) and 439-536 (APST…TVPS). Asparagine 340 and asparagine 407 each carry an N-linked (GlcNAc...) asparagine glycan. A helical transmembrane segment spans residues 548–569 (LLVSVAGSIVLVVILIAAFVIS). Residues 570-985 (RRRSKYSKAK…QQMQGRMVPV (416 aa)) are Cytoplasmic-facing. Residues tyrosine 595 and tyrosine 601 each carry the phosphotyrosine; by autocatalysis modification. In terms of domain architecture, Protein kinase spans 620–881 (IKIEKVIGVG…QIVSMLDKLI (262 aa)). Residues 626–634 (IGVGEFGEV) and lysine 652 contribute to the ATP site. The active-site Proton acceptor is the aspartate 745. 2 positions are modified to phosphotyrosine; by autocatalysis: tyrosine 778 and tyrosine 927. The region spanning 910 to 974 (SQVASVLDWL…LSSVQGMRTQ (65 aa)) is the SAM domain. The PDZ-binding motif lies at 983 to 985 (VPV).

The protein belongs to the protein kinase superfamily. Tyr protein kinase family. Ephrin receptor subfamily. Localized expression in a subset of neural crest and neural tissues in embryos.

The protein localises to the cell membrane. It is found in the early endosome. The enzyme catalyses L-tyrosyl-[protein] + ATP = O-phospho-L-tyrosyl-[protein] + ADP + H(+). Receptor tyrosine kinase which binds membrane-bound ephrin family ligands residing on adjacent cells, leading to contact-dependent bidirectional signaling into neighboring cells. The signaling pathway downstream of the receptor is referred to as forward signaling while the signaling pathway downstream of the ephrin ligand is referred to as reverse signaling. Highly promiscuous, it has the unique property among Eph receptors to bind and to be physiologically activated by both GPI-anchored ephrin-A and transmembrane ephrin-B ligands including EFNA1 and EFNB3. Upon activation by ephrin ligands, modulates cell morphology and integrin-dependent cell adhesion through regulation of the Rac, Rap and Rho GTPases activity. Plays an important role in the development of the nervous system controlling different steps of axonal guidance including the establishment of the corticospinal projections. The protein is Ephrin type-A receptor 4-B (epha4-b) of Xenopus laevis (African clawed frog).